The following is a 348-amino-acid chain: Carbamoyl phosphate synthase small chain (348 aa).

The segment at 1–167 (MKRYLITSDG…VKNIRGKGER (167 aa)) is CPSase. The L-glutamine site is built by Ser45, Gly213, and Gly215. The 181-residue stretch at 168-348 (RILFIDLGSK…RRRTEDAAKG (181 aa)) folds into the Glutamine amidotransferase type-1 domain. Cys242 acts as the Nucleophile in catalysis. Positions 243, 246, 282, 284, and 285 each coordinate L-glutamine. Catalysis depends on residues His321 and Glu323.

The protein belongs to the CarA family. As to quaternary structure, composed of two chains; the small (or glutamine) chain promotes the hydrolysis of glutamine to ammonia, which is used by the large (or ammonia) chain to synthesize carbamoyl phosphate. Tetramer of heterodimers (alpha,beta)4.

The enzyme catalyses hydrogencarbonate + L-glutamine + 2 ATP + H2O = carbamoyl phosphate + L-glutamate + 2 ADP + phosphate + 2 H(+). It catalyses the reaction L-glutamine + H2O = L-glutamate + NH4(+). It participates in amino-acid biosynthesis; L-arginine biosynthesis; carbamoyl phosphate from bicarbonate: step 1/1. Its pathway is pyrimidine metabolism; UMP biosynthesis via de novo pathway; (S)-dihydroorotate from bicarbonate: step 1/3. In terms of biological role, small subunit of the glutamine-dependent carbamoyl phosphate synthetase (CPSase). CPSase catalyzes the formation of carbamoyl phosphate from the ammonia moiety of glutamine, carbonate, and phosphate donated by ATP, constituting the first step of 2 biosynthetic pathways, one leading to arginine and/or urea and the other to pyrimidine nucleotides. The small subunit (glutamine amidotransferase) binds and cleaves glutamine to supply the large subunit with the substrate ammonia. This chain is Carbamoyl phosphate synthase small chain, found in Thermoplasma acidophilum (strain ATCC 25905 / DSM 1728 / JCM 9062 / NBRC 15155 / AMRC-C165).